The following is a 311-amino-acid chain: Lipoyl synthase (311 aa).

The [4Fe-4S] cluster site is built by cysteine 47, cysteine 52, cysteine 58, cysteine 73, cysteine 77, cysteine 80, and serine 286. One can recognise a Radical SAM core domain in the interval 59-276; it reads WSRHTATYLA…RSVGESLGLF (218 aa).

This sequence belongs to the radical SAM superfamily. Lipoyl synthase family. [4Fe-4S] cluster is required as a cofactor.

It is found in the cytoplasm. It catalyses the reaction [[Fe-S] cluster scaffold protein carrying a second [4Fe-4S](2+) cluster] + N(6)-octanoyl-L-lysyl-[protein] + 2 oxidized [2Fe-2S]-[ferredoxin] + 2 S-adenosyl-L-methionine + 4 H(+) = [[Fe-S] cluster scaffold protein] + N(6)-[(R)-dihydrolipoyl]-L-lysyl-[protein] + 4 Fe(3+) + 2 hydrogen sulfide + 2 5'-deoxyadenosine + 2 L-methionine + 2 reduced [2Fe-2S]-[ferredoxin]. It functions in the pathway protein modification; protein lipoylation via endogenous pathway; protein N(6)-(lipoyl)lysine from octanoyl-[acyl-carrier-protein]: step 2/2. Functionally, catalyzes the radical-mediated insertion of two sulfur atoms into the C-6 and C-8 positions of the octanoyl moiety bound to the lipoyl domains of lipoate-dependent enzymes, thereby converting the octanoylated domains into lipoylated derivatives. The polypeptide is Lipoyl synthase (Chlamydia trachomatis serovar A (strain ATCC VR-571B / DSM 19440 / HAR-13)).